We begin with the raw amino-acid sequence, 141 residues long: Transmembrane protein 216 (141 aa).

4 helical membrane passes run 15–35, 49–69, 82–102, and 115–135; these read VLFF…LLIF, LVLD…RLFF, LGIS…YLLL, and SILL…LATF.

As to quaternary structure, part of the tectonic-like complex (also named B9 complex). Interacts with TMEM107.

It is found in the membrane. Its subcellular location is the cytoplasm. The protein localises to the cytoskeleton. The protein resides in the cilium basal body. Its function is as follows. Part of the tectonic-like complex which is required for tissue-specific ciliogenesis and may regulate ciliary membrane composition. This chain is Transmembrane protein 216 (Tmem216), found in Mus musculus (Mouse).